A 422-amino-acid polypeptide reads, in one-letter code: Serine--tRNA ligase (422 aa).

Position 231-233 (231-233 (TSE)) interacts with L-serine. 262-264 (RQE) serves as a coordination point for ATP. An L-serine-binding site is contributed by Glu-285. 349–352 (EISS) provides a ligand contact to ATP. An L-serine-binding site is contributed by Ser-384.

Belongs to the class-II aminoacyl-tRNA synthetase family. Type-1 seryl-tRNA synthetase subfamily. Homodimer. The tRNA molecule binds across the dimer.

It is found in the cytoplasm. The catalysed reaction is tRNA(Ser) + L-serine + ATP = L-seryl-tRNA(Ser) + AMP + diphosphate + H(+). It carries out the reaction tRNA(Sec) + L-serine + ATP = L-seryl-tRNA(Sec) + AMP + diphosphate + H(+). It functions in the pathway aminoacyl-tRNA biosynthesis; selenocysteinyl-tRNA(Sec) biosynthesis; L-seryl-tRNA(Sec) from L-serine and tRNA(Sec): step 1/1. Catalyzes the attachment of serine to tRNA(Ser). Is also able to aminoacylate tRNA(Sec) with serine, to form the misacylated tRNA L-seryl-tRNA(Sec), which will be further converted into selenocysteinyl-tRNA(Sec). The sequence is that of Serine--tRNA ligase from Mycoplasma mycoides subsp. mycoides SC (strain CCUG 32753 / NCTC 10114 / PG1).